Reading from the N-terminus, the 108-residue chain is Phosphoribosyl-ATP pyrophosphatase (108 aa).

This sequence belongs to the PRA-PH family.

The protein resides in the cytoplasm. It carries out the reaction 1-(5-phospho-beta-D-ribosyl)-ATP + H2O = 1-(5-phospho-beta-D-ribosyl)-5'-AMP + diphosphate + H(+). Its pathway is amino-acid biosynthesis; L-histidine biosynthesis; L-histidine from 5-phospho-alpha-D-ribose 1-diphosphate: step 2/9. This is Phosphoribosyl-ATP pyrophosphatase from Geobacter sulfurreducens (strain ATCC 51573 / DSM 12127 / PCA).